Consider the following 315-residue polypeptide: MKIGYFGTPEHSAKLLKALIDSTLAEVLFVVTNPDRPKGRNKKTEAGPVKKTALEHHIPVFQYESIKREKEKALSDFGSFPADLYVVFAYGSILPKEVYECPPLSSINLHGSLLPDLRGASPVQTALWKGYSASGITIQYIGEKMDEGDILLSQKIDIIPEDNTETLMNKITDAGTESILRLLKAYDGKPFPAIPQNHAKATYCGKIKSEDRILDWSLGAEELHNRIRALYPDAIATTRFREKRIGILKTKLSSLSIESNPEPGKLKRLDKKGLLTQCGDGRFLEILELQPENKNRMSASDFLNGFRIQEGETFG.

112 to 115 (SLLP) lines the (6S)-5,6,7,8-tetrahydrofolate pocket.

The protein belongs to the Fmt family.

It catalyses the reaction L-methionyl-tRNA(fMet) + (6R)-10-formyltetrahydrofolate = N-formyl-L-methionyl-tRNA(fMet) + (6S)-5,6,7,8-tetrahydrofolate + H(+). Functionally, attaches a formyl group to the free amino group of methionyl-tRNA(fMet). The formyl group appears to play a dual role in the initiator identity of N-formylmethionyl-tRNA by promoting its recognition by IF2 and preventing the misappropriation of this tRNA by the elongation apparatus. This Leptospira borgpetersenii serovar Hardjo-bovis (strain JB197) protein is Methionyl-tRNA formyltransferase.